A 583-amino-acid polypeptide reads, in one-letter code: Arginine--tRNA ligase (583 aa).

A 'HIGH' region motif is present at residues Ala-131–His-141.

This sequence belongs to the class-I aminoacyl-tRNA synthetase family. Monomer.

The protein localises to the cytoplasm. It carries out the reaction tRNA(Arg) + L-arginine + ATP = L-arginyl-tRNA(Arg) + AMP + diphosphate. This chain is Arginine--tRNA ligase, found in Parvibaculum lavamentivorans (strain DS-1 / DSM 13023 / NCIMB 13966).